Consider the following 469-residue polypeptide: Neuraminidase (469 aa).

The Intravirion portion of the chain corresponds to 1–6; the sequence is MNPNQK. A helical membrane pass occupies residues 7–29; sequence IITIGSVSLTIATVCFLMQIAIL. The segment at 11–33 is involved in apical transport and lipid raft association; sequence GSVSLTIATVCFLMQIAILATTV. The Virion surface portion of the chain corresponds to 30–469; that stretch reads ATTVTLHFKQ…DGANINFMPI (440 aa). The hypervariable stalk region stretch occupies residues 36-88; the sequence is HFKQNECNPPANNQVVPCEPIIIERNITEIVYLNNITIEKEVCPEVAEYRNWS. 3 N-linked (GlcNAc...) asparagine; by host glycosylation sites follow: Asn61, Asn70, and Asn86. The segment at 91–469 is head of neuraminidase; it reads QCQITGFAPF…DGANINFMPI (379 aa). Disulfide bonds link Cys92–Cys417, Cys124–Cys129, Cys183–Cys230, Cys232–Cys237, Cys278–Cys291, Cys280–Cys289, Cys318–Cys337, and Cys421–Cys447. Arg118 provides a ligand contact to substrate. N-linked (GlcNAc...) asparagine; by host glycosylation occurs at Asn146. Asp151 functions as the Proton donor/acceptor in the catalytic mechanism. Arg152 is a binding site for substrate. Residues Asn200 and Asn234 are each glycosylated (N-linked (GlcNAc...) asparagine; by host). 276–277 serves as a coordination point for substrate; that stretch reads EE. Residue Arg292 coordinates substrate. Ca(2+) is bound by residues Asp293, Gly297, and Asp324. The segment at 324 to 349 is disordered; it reads DTPRSDDSSSNSNCRDPNNERGNPGV. Arg371 is a binding site for substrate. Asn402 is a glycosylation site (N-linked (GlcNAc...) asparagine; by host). Tyr406 (nucleophile) is an active-site residue.

The protein belongs to the glycosyl hydrolase 34 family. In terms of assembly, homotetramer. Ca(2+) is required as a cofactor. Post-translationally, N-glycosylated.

It localises to the virion membrane. The protein localises to the host apical cell membrane. The catalysed reaction is Hydrolysis of alpha-(2-&gt;3)-, alpha-(2-&gt;6)-, alpha-(2-&gt;8)- glycosidic linkages of terminal sialic acid residues in oligosaccharides, glycoproteins, glycolipids, colominic acid and synthetic substrates.. Its activity is regulated as follows. Inhibited by the neuraminidase inhibitors zanamivir (Relenza) and oseltamivir (Tamiflu). These drugs interfere with the release of progeny virus from infected cells and are effective against all influenza strains. Resistance to neuraminidase inhibitors is quite rare. In terms of biological role, catalyzes the removal of terminal sialic acid residues from viral and cellular glycoconjugates. Cleaves off the terminal sialic acids on the glycosylated HA during virus budding to facilitate virus release. Additionally helps virus spread through the circulation by further removing sialic acids from the cell surface. These cleavages prevent self-aggregation and ensure the efficient spread of the progeny virus from cell to cell. Otherwise, infection would be limited to one round of replication. Described as a receptor-destroying enzyme because it cleaves a terminal sialic acid from the cellular receptors. May facilitate viral invasion of the upper airways by cleaving the sialic acid moieties on the mucin of the airway epithelial cells. Likely to plays a role in the budding process through its association with lipid rafts during intracellular transport. May additionally display a raft-association independent effect on budding. Plays a role in the determination of host range restriction on replication and virulence. Sialidase activity in late endosome/lysosome traffic seems to enhance virus replication. The sequence is that of Neuraminidase from Influenza A virus (strain A/Turkey/Wisconsin/1/1966 H9N2).